Here is an 814-residue protein sequence, read N- to C-terminus: Cellulase/esterase CelE (814 aa).

Positions 1-34 (MKKIVSLVCVLVMLVSILGSFSVVAASPVKGFQV) are cleaved as a signal peptide. Residues 35–354 (SGTKLLDASG…AVFWWDNGYY (320 aa)) form a cellulase region. Glutamate 193 acts as the Proton donor; for cellulase activity in catalysis. Glutamate 316 serves as the catalytic Nucleophile; for cellulase activity. Positions 409–479 (ANILYGDVNG…LLRSIDKFPA (71 aa)) constitute a Dockerin domain. Aspartate 415, asparagine 417, aspartate 419, glycine 420, lysine 421, aspartate 426, aspartate 451, valine 452, asparagine 453, aspartate 455, lysine 457, and aspartate 462 together coordinate Ca(2+). An esterase region spans residues 490–814 (PGILYNGRFD…TAEIKNKLGW (325 aa)). Residue serine 612 is the Nucleophile; for esterase activity of the active site.

It in the N-terminal section; belongs to the glycosyl hydrolase 5 (cellulase A) family. The protein in the C-terminal section; belongs to the carbohydrate esterase 2 (CE2) family.

Its subcellular location is the secreted. The catalysed reaction is Endohydrolysis of (1-&gt;4)-beta-D-glucosidic linkages in cellulose, lichenin and cereal beta-D-glucans.. It catalyses the reaction Deacetylation of xylans and xylo-oligosaccharides.. It participates in glycan metabolism; cellulose degradation. Its pathway is glycan degradation; xylan degradation. With respect to regulation, esterase activity of the CE2 module is inhibited when this domain binds to cellohexaose or beta-glucan. Functionally, multifunctional enzyme involved in the degradation of plant cell wall polysaccharides. Displays endoglucanase activity against carboxymethyl cellulose (CMC) and barley beta-glucan. Also catalyzes the deacetylation of acetylated birchwood xylan and glucomannan, with a preference for the latter, and of the synthetic substrate 4-nitrophenyl acetate (4-NPAc). This is Cellulase/esterase CelE from Acetivibrio thermocellus (strain ATCC 27405 / DSM 1237 / JCM 9322 / NBRC 103400 / NCIMB 10682 / NRRL B-4536 / VPI 7372) (Clostridium thermocellum).